Consider the following 193-residue polypeptide: Holliday junction branch migration complex subunit RuvA (193 aa).

The segment at 1-64 (MIGRIQGTLV…EDAQQLFGFA (64 aa)) is domain I. The interval 65–139 (TETEREAFRQ…GKLAPDLGVA (75 aa)) is domain II. Residues 139 to 143 (AGGKP) form a flexible linker region. The tract at residues 144-193 (QAIETSSEVLQALLALGYSEKEALLALKQIPADTSISDGIRMGLKYLSKA) is domain III.

The protein belongs to the RuvA family. In terms of assembly, homotetramer. Forms an RuvA(8)-RuvB(12)-Holliday junction (HJ) complex. HJ DNA is sandwiched between 2 RuvA tetramers; dsDNA enters through RuvA and exits via RuvB. An RuvB hexamer assembles on each DNA strand where it exits the tetramer. Each RuvB hexamer is contacted by two RuvA subunits (via domain III) on 2 adjacent RuvB subunits; this complex drives branch migration. In the full resolvosome a probable DNA-RuvA(4)-RuvB(12)-RuvC(2) complex forms which resolves the HJ.

The protein resides in the cytoplasm. In terms of biological role, the RuvA-RuvB-RuvC complex processes Holliday junction (HJ) DNA during genetic recombination and DNA repair, while the RuvA-RuvB complex plays an important role in the rescue of blocked DNA replication forks via replication fork reversal (RFR). RuvA specifically binds to HJ cruciform DNA, conferring on it an open structure. The RuvB hexamer acts as an ATP-dependent pump, pulling dsDNA into and through the RuvAB complex. HJ branch migration allows RuvC to scan DNA until it finds its consensus sequence, where it cleaves and resolves the cruciform DNA. In Polynucleobacter necessarius subsp. necessarius (strain STIR1), this protein is Holliday junction branch migration complex subunit RuvA.